We begin with the raw amino-acid sequence, 505 residues long: Glutamate--tRNA ligase (505 aa).

Residues 11 to 21 (PSPTGPLHIGG) carry the 'HIGH' region motif. The 'KMSKS' region motif lies at 260-264 (KLSKR). Lys-263 provides a ligand contact to ATP.

The protein belongs to the class-I aminoacyl-tRNA synthetase family. Glutamate--tRNA ligase type 1 subfamily. Monomer.

It localises to the cytoplasm. The catalysed reaction is tRNA(Glu) + L-glutamate + ATP = L-glutamyl-tRNA(Glu) + AMP + diphosphate. In terms of biological role, catalyzes the attachment of glutamate to tRNA(Glu) in a two-step reaction: glutamate is first activated by ATP to form Glu-AMP and then transferred to the acceptor end of tRNA(Glu). The protein is Glutamate--tRNA ligase of Christiangramia forsetii (strain DSM 17595 / CGMCC 1.15422 / KT0803) (Gramella forsetii).